Reading from the N-terminus, the 123-residue chain is MAKKRYRKVTEGIAHIKATFNNTMISVSDSQGNVLCFRSAGGSGFKGSRKGTPYGAQMASEEVGRLARDNFDMRRIAVRVKGPGAGRDSAIRGLRSAGLEVIHLEDRTPLPHNGCRPRKKRRV.

Belongs to the universal ribosomal protein uS11 family. In terms of assembly, part of the 30S ribosomal subunit. Interacts with proteins S7 and S18. Binds to IF-3.

Functionally, located on the platform of the 30S subunit, it bridges several disparate RNA helices of the 16S rRNA. Forms part of the Shine-Dalgarno cleft in the 70S ribosome. In Coxiella burnetii (strain CbuK_Q154) (Coxiella burnetii (strain Q154)), this protein is Small ribosomal subunit protein uS11.